A 448-amino-acid chain; its full sequence is Beta-alanine--pyruvate aminotransferase (448 aa).

Position 61 (Trp61) interacts with substrate. 120 to 121 (GS) provides a ligand contact to pyridoxal 5'-phosphate. Residue Lys288 is modified to N6-(pyridoxal phosphate)lysine. Thr327 provides a ligand contact to pyridoxal 5'-phosphate. Arg414 and Gln421 together coordinate substrate.

This sequence belongs to the class-III pyridoxal-phosphate-dependent aminotransferase family. In terms of assembly, homotetramer. The cofactor is pyridoxal 5'-phosphate.

It catalyses the reaction 3-oxopropanoate + L-alanine = beta-alanine + pyruvate. Its activity is regulated as follows. Inhibited by gabaculine (5-amino-1,3-cyclohexadienylcarboxylic acid). In terms of biological role, involved in the degradation of beta-alanine. Catalyzes the transfer of the amino group from beta-alanine to pyruvate to yield L-alanine and 3-oxopropanoate. It can also accept both 4-aminobutyrate and (S)-alpha-methylbenzylamine (MBA) as amino-group donors in the presence of pyruvate as an amine acceptor. This is Beta-alanine--pyruvate aminotransferase (bauA) from Pseudomonas aeruginosa (strain ATCC 15692 / DSM 22644 / CIP 104116 / JCM 14847 / LMG 12228 / 1C / PRS 101 / PAO1).